A 207-amino-acid chain; its full sequence is Ribosomal RNA small subunit methyltransferase G (207 aa).

S-adenosyl-L-methionine contacts are provided by residues glycine 73, leucine 78, valine 124 to glutamate 125, and arginine 139.

It belongs to the methyltransferase superfamily. RNA methyltransferase RsmG family.

The protein localises to the cytoplasm. It carries out the reaction guanosine(527) in 16S rRNA + S-adenosyl-L-methionine = N(7)-methylguanosine(527) in 16S rRNA + S-adenosyl-L-homocysteine. In terms of biological role, specifically methylates the N7 position of guanine in position 527 of 16S rRNA. The chain is Ribosomal RNA small subunit methyltransferase G from Shigella flexneri.